The chain runs to 420 residues: Bicoumarin synthase ktnC (420 aa).

Cys362 is a binding site for heme.

This sequence belongs to the cytochrome P450 family. It depends on heme as a cofactor.

The enzyme catalyses 2 7-demethylsiderin + NADPH + O2 = orlandin + NADP(+) + 2 H2O. The protein operates within secondary metabolite biosynthesis. Non-reducing polyketide synthase; part of the gene cluster that mediates the biosynthesis of the bicoumarin kotanin. The non-reducing polyketide synthase ktnS first catalyzes the formation of the pentaketidic 4,7-dihydroxy-5-methylcoumarin from acetyl coenzyme A and 4 malonyl coenzyme A molecules. Further O-methylation by ktnB leads to the formation of 7-demethylsiderin. Then, an oxidative phenol coupling catalyzed by the cytochrome P450 monooxygenase ktnC forms the 8,8'-dimer P-orlandin via dimerization the monomeric precursor, 7-demethylsiderin. P-orlandin is subsequently O-methylated in a stepwise fashion to demethylkotanin and kotanin. This is Bicoumarin synthase ktnC from Aspergillus niger (strain ATCC MYA-4892 / CBS 513.88 / FGSC A1513).